We begin with the raw amino-acid sequence, 179 residues long: MADLITVARPYAEALYGLAKESGQEQAWADALQALAAMIADVQAQAFLTDPERADAEKVSLLSAVPVAVDVKAWKAFLALLIHNDRWPATAEIGTLFADAMRRAEGVVDVLVTSAIALDAGQKTAVQSALERRFAGHKVAFREAVDAALIGGLVIHTGDLTIDASVRGQVQQLARTLRS.

Belongs to the ATPase delta chain family. F-type ATPases have 2 components, F(1) - the catalytic core - and F(0) - the membrane proton channel. F(1) has five subunits: alpha(3), beta(3), gamma(1), delta(1), epsilon(1). F(0) has three main subunits: a(1), b(2) and c(10-14). The alpha and beta chains form an alternating ring which encloses part of the gamma chain. F(1) is attached to F(0) by a central stalk formed by the gamma and epsilon chains, while a peripheral stalk is formed by the delta and b chains.

It is found in the cell inner membrane. Functionally, f(1)F(0) ATP synthase produces ATP from ADP in the presence of a proton or sodium gradient. F-type ATPases consist of two structural domains, F(1) containing the extramembraneous catalytic core and F(0) containing the membrane proton channel, linked together by a central stalk and a peripheral stalk. During catalysis, ATP synthesis in the catalytic domain of F(1) is coupled via a rotary mechanism of the central stalk subunits to proton translocation. In terms of biological role, this protein is part of the stalk that links CF(0) to CF(1). It either transmits conformational changes from CF(0) to CF(1) or is implicated in proton conduction. This is ATP synthase subunit delta from Acidithiobacillus ferrooxidans (strain ATCC 23270 / DSM 14882 / CIP 104768 / NCIMB 8455) (Ferrobacillus ferrooxidans (strain ATCC 23270)).